The sequence spans 332 residues: MTSTNEPIPTEEEIKNGFKFIQDEICKFLITTTGGHQQYSEDKWDYTKGSGGGISRVWEGKEEEGFYLNQDYQSQNNKCDKIEKGGVNFSYIVGSNLPSAAATQFKIAPDTKYIATGVSLVIHPYNPNVPTIHMNVRYFEAGDVWWFGGGVDLTPVYPKLDQVVEFHSTLKKVCDQYGQEENKTSYALGKAECDSYFFLPHRGETRGVGGLFFDHLKSDKAKTWKFIYQLGLSFIDLYKPFLVNNSSISYDKVQREYQLYRRSRYVEFNLLFDRGTKFGILSEGRTESILMSLPAVCKWKYNYKPEENTPEANLLTFLRPRDWLNENQENKN.

Residue serine 119 participates in coproporphyrinogen III binding. Catalysis depends on histidine 133, which acts as the Proton donor. Coproporphyrinogen III-binding positions include 135–137 and 284–285; these read NVR and GR.

This sequence belongs to the aerobic coproporphyrinogen-III oxidase family. As to quaternary structure, homodimer.

It catalyses the reaction coproporphyrinogen III + O2 + 2 H(+) = protoporphyrinogen IX + 2 CO2 + 2 H2O. It participates in porphyrin-containing compound metabolism; protoporphyrin-IX biosynthesis; protoporphyrinogen-IX from coproporphyrinogen-III (O2 route): step 1/1. Involved in the heme biosynthesis. Catalyzes the aerobic oxidative decarboxylation of propionate groups of rings A and B of coproporphyrinogen-III to yield the vinyl groups in protoporphyrinogen-IX. The polypeptide is Oxygen-dependent coproporphyrinogen-III oxidase (cpox) (Dictyostelium discoideum (Social amoeba)).